Reading from the N-terminus, the 134-residue chain is Methylglyoxal synthase (134 aa).

Residues 1–134 (MKIALIAHDR…DWRLIQERRN (134 aa)) form the MGS-like domain. Substrate-binding positions include H8, K12, 34 to 37 (TGTT), and 54 to 55 (SG). D60 (proton donor/acceptor) is an active-site residue. Residue H87 participates in substrate binding.

The protein belongs to the methylglyoxal synthase family.

The enzyme catalyses dihydroxyacetone phosphate = methylglyoxal + phosphate. Its function is as follows. Catalyzes the formation of methylglyoxal from dihydroxyacetone phosphate. In Lysinibacillus sphaericus (strain C3-41), this protein is Methylglyoxal synthase.